Consider the following 190-residue polypeptide: Elongation factor P 2 (190 aa).

Belongs to the elongation factor P family.

The protein localises to the cytoplasm. It participates in protein biosynthesis; polypeptide chain elongation. Involved in peptide bond synthesis. Stimulates efficient translation and peptide-bond synthesis on native or reconstituted 70S ribosomes in vitro. Probably functions indirectly by altering the affinity of the ribosome for aminoacyl-tRNA, thus increasing their reactivity as acceptors for peptidyl transferase. This is Elongation factor P 2 (efp2) from Protochlamydia amoebophila (strain UWE25).